The chain runs to 258 residues: Imidazole glycerol phosphate synthase subunit HisF (258 aa).

Residues Asp12 and Asp131 contribute to the active site.

It belongs to the HisA/HisF family. As to quaternary structure, heterodimer of HisH and HisF.

The protein localises to the cytoplasm. It catalyses the reaction 5-[(5-phospho-1-deoxy-D-ribulos-1-ylimino)methylamino]-1-(5-phospho-beta-D-ribosyl)imidazole-4-carboxamide + L-glutamine = D-erythro-1-(imidazol-4-yl)glycerol 3-phosphate + 5-amino-1-(5-phospho-beta-D-ribosyl)imidazole-4-carboxamide + L-glutamate + H(+). It functions in the pathway amino-acid biosynthesis; L-histidine biosynthesis; L-histidine from 5-phospho-alpha-D-ribose 1-diphosphate: step 5/9. Its function is as follows. IGPS catalyzes the conversion of PRFAR and glutamine to IGP, AICAR and glutamate. The HisF subunit catalyzes the cyclization activity that produces IGP and AICAR from PRFAR using the ammonia provided by the HisH subunit. This Corynebacterium glutamicum (strain R) protein is Imidazole glycerol phosphate synthase subunit HisF.